The sequence spans 502 residues: Glutamate--tRNA ligase (502 aa).

Positions 12–22 match the 'HIGH' region motif; it reads PSPTGYLHVGG. Positions 259–263 match the 'KMSKS' region motif; the sequence is KLSKR. Lysine 262 is an ATP binding site.

The protein belongs to the class-I aminoacyl-tRNA synthetase family. Glutamate--tRNA ligase type 1 subfamily. Monomer.

The protein localises to the cytoplasm. The enzyme catalyses tRNA(Glu) + L-glutamate + ATP = L-glutamyl-tRNA(Glu) + AMP + diphosphate. Its function is as follows. Catalyzes the attachment of glutamate to tRNA(Glu) in a two-step reaction: glutamate is first activated by ATP to form Glu-AMP and then transferred to the acceptor end of tRNA(Glu). This chain is Glutamate--tRNA ligase, found in Chlorobium chlorochromatii (strain CaD3).